The primary structure comprises 137 residues: Nucleoside diphosphate kinase (137 aa).

Residues Lys9, Phe57, Arg85, Thr91, Arg102, and Asn112 each coordinate ATP. His115 functions as the Pros-phosphohistidine intermediate in the catalytic mechanism.

The protein belongs to the NDK family. In terms of assembly, homotetramer. Mg(2+) is required as a cofactor.

The protein resides in the cytoplasm. The catalysed reaction is a 2'-deoxyribonucleoside 5'-diphosphate + ATP = a 2'-deoxyribonucleoside 5'-triphosphate + ADP. The enzyme catalyses a ribonucleoside 5'-diphosphate + ATP = a ribonucleoside 5'-triphosphate + ADP. Functionally, major role in the synthesis of nucleoside triphosphates other than ATP. The ATP gamma phosphate is transferred to the NDP beta phosphate via a ping-pong mechanism, using a phosphorylated active-site intermediate. In Geotalea daltonii (strain DSM 22248 / JCM 15807 / FRC-32) (Geobacter daltonii), this protein is Nucleoside diphosphate kinase.